A 277-amino-acid chain; its full sequence is Caspase-3 (277 aa).

Met1 is subject to N-acetylmethionine. 2 propeptides span residues 1–9 and 10–28; these read MENNKTSVD and SKSI…KSMD. At Lys11 the chain carries N6-acetyllysine. Ser26 carries the phosphoserine modification. Active-site residues include His121 and Cys163. At Cys163 the chain carries S-nitrosocysteine; in inhibited form.

This sequence belongs to the peptidase C14A family. Heterotetramer that consists of two anti-parallel arranged heterodimers, each one formed by a 17 kDa (p17) and a 12 kDa (p12) subunit. Interacts with BIRC6/bruce. In terms of assembly, (Microbial infection) Subunit p17 interacts with African swine fever virus (ASFV) inhibitor of apoptosis protein. In terms of processing, cleavage by granzyme B, caspase-6, caspase-8 and caspase-10 generates the two active subunits. Additional processing of the propeptides is likely due to the autocatalytic activity of the activated protease. Active heterodimers between the small subunit of caspase-7 protease and the large subunit of caspase-3 also occur and vice versa. Post-translationally, S-nitrosylated on its catalytic site cysteine in unstimulated cell lines and denitrosylated upon activation of the Fas apoptotic pathway, associated with an increase in intracellular caspase activity. Fas therefore activates caspase-3 not only by inducing the cleavage of the caspase zymogen to its active subunits, but also by stimulating the denitrosylation of its active site thiol. Ubiquitinated by BIRC6; this activity is inhibited by DIABLO/SMAC.

The protein localises to the cytoplasm. The catalysed reaction is Strict requirement for an Asp residue at positions P1 and P4. It has a preferred cleavage sequence of Asp-Xaa-Xaa-Asp-|- with a hydrophobic amino-acid residue at P2 and a hydrophilic amino-acid residue at P3, although Val or Ala are also accepted at this position.. With respect to regulation, inhibited by BIRC6; following inhibition of BIRC6-caspase binding by DIABLO/SMAC, BIRC6 is subjected to caspase cleavage, leading to an increase in active caspases. Its function is as follows. Involved in the activation cascade of caspases responsible for apoptosis execution. At the onset of apoptosis, it proteolytically cleaves poly(ADP-ribose) polymerase PARP1 at a '216-Asp-|-Gly-217' bond. Cleaves and activates sterol regulatory element binding proteins (SREBPs) between the basic helix-loop-helix leucine zipper domain and the membrane attachment domain. Cleaves and activates caspase-6, -7 and -9 (CASP6, CASP7 and CASP9, respectively). Cleaves and inactivates interleukin-18 (IL18). Triggers cell adhesion in sympathetic neurons through RET cleavage. Cleaves IL-1 beta between an Asp and an Ala, releasing the mature cytokine which is involved in a variety of inflammatory processes. Cleaves and inhibits serine/threonine-protein kinase AKT1 in response to oxidative stress. Acts as an inhibitor of type I interferon production during virus-induced apoptosis by mediating cleavage of antiviral proteins CGAS, IRF3 and MAVS, thereby preventing cytokine overproduction. Also involved in pyroptosis by mediating cleavage and activation of gasdermin-E (GSDME). Cleaves XRCC4 and phospholipid scramblase proteins XKR4, XKR8 and XKR9, leading to promote phosphatidylserine exposure on apoptotic cell surface. Cleaves BIRC6 following inhibition of BIRC6-caspase binding by DIABLO/SMAC. In Sus scrofa (Pig), this protein is Caspase-3 (CASP3).